A 240-amino-acid polypeptide reads, in one-letter code: Uridylate kinase (240 aa).

13-16 provides a ligand contact to ATP; it reads KFSG. Gly55 provides a ligand contact to UMP. Positions 56 and 60 each coordinate ATP. UMP is bound by residues Asp76 and 137–144; that span reads TGNPFFTT. 3 residues coordinate ATP: Thr164, Tyr170, and Asp173.

This sequence belongs to the UMP kinase family. In terms of assembly, homohexamer.

It is found in the cytoplasm. The enzyme catalyses UMP + ATP = UDP + ADP. Its pathway is pyrimidine metabolism; CTP biosynthesis via de novo pathway; UDP from UMP (UMPK route): step 1/1. With respect to regulation, inhibited by UTP. Functionally, catalyzes the reversible phosphorylation of UMP to UDP. The polypeptide is Uridylate kinase (Helicobacter pylori (strain ATCC 700392 / 26695) (Campylobacter pylori)).